The sequence spans 329 residues: MQFIDQARITVRAGRGGDGIMAFRREKYVPAGGPSGGDGGNGGNVVLEADGNLQTLLDFKYKRLFPAPDGRRGGPNRCTGASGKDLIIKVPCGTEVRHLYTGILLGDLTRSEDLLVVAFGGRGGLGNAHYLSNRNRAPEKFTEGRDGEEWFLQLELKLLAEVGIIGLPNAGKSTLISVLSAARPKIADYPFTTLVPNLGVVRRPSGDGTVFADIPGLIAGAAQGAGLGHDFLRHIERTRLLIHVLDGGAEDPVEDLLVVEKELVAYGHDLVERPRLLVLNKQELLDEQHQDQLVDALQAASGRSLILISAAMGLGLEGLLAQVWKELGV.

The Obg domain maps to 1–159 (MQFIDQARIT…WFLQLELKLL (159 aa)). Residues 160 to 328 (AEVGIIGLPN…LLAQVWKELG (169 aa)) enclose the OBG-type G domain. ATP-binding positions include 166–173 (GLPNAGKS), 191–195 (FTTLV), 213–216 (DIPG), 280–283 (NKQE), and 309–311 (SAA). Mg(2+)-binding residues include Ser173 and Thr193.

Belongs to the TRAFAC class OBG-HflX-like GTPase superfamily. OBG GTPase family. As to quaternary structure, monomer. Requires Mg(2+) as cofactor.

The protein localises to the cytoplasm. In terms of biological role, an essential GTPase which binds GTP, GDP and possibly (p)ppGpp with moderate affinity, with high nucleotide exchange rates and a fairly low GTP hydrolysis rate. Plays a role in control of the cell cycle, stress response, ribosome biogenesis and in those bacteria that undergo differentiation, in morphogenesis control. The chain is GTPase Obg from Prochlorococcus marinus (strain MIT 9313).